The primary structure comprises 240 residues: ATP synthase subunit a (240 aa).

A run of 5 helical transmembrane segments spans residues 21 to 41 (LSNLMMTFIVCLIVFVFCVWG), 78 to 98 (IFLPLGLTLIFYILVSNLIGV), 116 to 136 (DAVMTLTLSTMIIALTHYYGI), 183 to 203 (ILLSLLVGLATTSIFGFFGAA), and 212 to 232 (FSVFIGAIQSYVFVMLTMVYM).

This sequence belongs to the ATPase A chain family. F-type ATPases have 2 components, CF(1) - the catalytic core - and CF(0) - the membrane proton channel. CF(1) has five subunits: alpha(3), beta(3), gamma(1), delta(1), epsilon(1). CF(0) has three main subunits: a(1), b(2) and c(9-12). The alpha and beta chains form an alternating ring which encloses part of the gamma chain. CF(1) is attached to CF(0) by a central stalk formed by the gamma and epsilon chains, while a peripheral stalk is formed by the delta and b chains.

The protein resides in the cell membrane. Key component of the proton channel; it plays a direct role in the translocation of protons across the membrane. The polypeptide is ATP synthase subunit a (Oceanobacillus iheyensis (strain DSM 14371 / CIP 107618 / JCM 11309 / KCTC 3954 / HTE831)).